The chain runs to 131 residues: MSWQTYVDEHLMCEIEGHHLASAAILGHDGTVWAQSADFPQFKPEEITGIMKDFDEPGHLAPTGMFVATAKYMVIQGEPGAVIRGKKGAGGITIKKTGQALVVGIYDEPMTPGQCNMVVERLGDYLLKQGL.

A disulfide bond links Cys13 and Cys115. The Involved in PIP2 interaction motif lies at 81–97 (AVIRGKKGAGGITIKKT). Phosphothreonine is present on Thr111.

Belongs to the profilin family. In terms of assembly, occurs in many kinds of cells as a complex with monomeric actin in a 1:1 ratio. Post-translationally, phosphorylated by MAP kinases.

It is found in the cytoplasm. The protein resides in the cytoskeleton. Functionally, binds to actin and affects the structure of the cytoskeleton. At high concentrations, profilin prevents the polymerization of actin, whereas it enhances it at low concentrations. This is Profilin-7 from Phleum pratense (Common timothy).